The following is a 287-amino-acid chain: Type 1 encapsulin shell protein EncA (287 aa).

It belongs to the encapsulin family. Family 1 subfamily. In terms of assembly, the 32 nm encapsulin nanocompartment is formed by 180 subunits; monomers form pentamers which assemble to form shells. There are 36 pores where the pentamers meet as well as 3-fold axis channels and dimer channels. The N-terminus of the protein is inside the shell.

It localises to the encapsulin nanocompartment. Functionally, shell component of a type 1, iron-storage encapsulin nanocompartment. Encapsulin nanocompartments are 32 nm in diameter with an iron- and phosphorus-rich core (4Fe:1P) about 24 nm in diameter. Upon expression in E.coli most particles are 32 nm, 20% are 18 nm. The core is filled with an average of 14 dense granules, 5-6 nm in diameter that are not evenly distributed. Each nanocompartment is estimated to hold 30,000-35,000 Fe atoms. The minor proteins EncB, EncC and EncD probably lie against the interior face of the nanocompartment. In Myxococcus xanthus (strain DK1622), this protein is Type 1 encapsulin shell protein EncA.